The following is a 551-amino-acid chain: RCC1 and BTB domain-containing protein 2 (551 aa).

6 RCC1 repeats span residues 64–115, 117–169, 171–222, 223–274, 276–326, and 328–382; these read NDEI…VLAT, DGEV…VLTS, GEVF…AVVD, TGEV…VLTD, GQIY…AAKT, and GGHV…TVAE. One can recognise a BTB domain in the interval 394–457; that stretch reads ADLKFLVDGK…LYTDNISLSP (64 aa).

Expressed in testis and heart (at protein level).

Its subcellular location is the cytoplasmic vesicle. The protein resides in the secretory vesicle. It is found in the acrosome. The protein is RCC1 and BTB domain-containing protein 2 (Rcbtb2) of Mus musculus (Mouse).